The chain runs to 115 residues: Evasin P1183 (115 aa).

Positions 1–25 (MTRNWSFRVIFVSAMWCALLKFATL) are cleaved as a signal peptide. 4 cysteine pairs are disulfide-bonded: Cys-38-Cys-58, Cys-54-Cys-94, Cys-70-Cys-99, and Cys-89-Cys-108. Residues Asn-45, Asn-72, and Asn-103 are each glycosylated (N-linked (GlcNAc...) asparagine).

The protein localises to the secreted. In terms of biological role, salivary chemokine-binding protein which binds to host chemokine CCL2. This Amblyomma triste (Neotropical tick) protein is Evasin P1183.